A 397-amino-acid chain; its full sequence is Argininosuccinate synthase (397 aa).

Position 9-17 (9-17 (AYSGGLDTT)) interacts with ATP. Residue tyrosine 87 participates in L-citrulline binding. Residue glycine 117 coordinates ATP. 3 residues coordinate L-aspartate: threonine 119, asparagine 123, and aspartate 124. L-citrulline is bound at residue asparagine 123. Residues arginine 127, serine 174, serine 183, glutamate 259, and tyrosine 271 each coordinate L-citrulline.

It belongs to the argininosuccinate synthase family. Type 1 subfamily. In terms of assembly, homotetramer.

Its subcellular location is the cytoplasm. It catalyses the reaction L-citrulline + L-aspartate + ATP = 2-(N(omega)-L-arginino)succinate + AMP + diphosphate + H(+). It functions in the pathway amino-acid biosynthesis; L-arginine biosynthesis; L-arginine from L-ornithine and carbamoyl phosphate: step 2/3. The protein is Argininosuccinate synthase of Pyrobaculum aerophilum (strain ATCC 51768 / DSM 7523 / JCM 9630 / CIP 104966 / NBRC 100827 / IM2).